Here is a 653-residue protein sequence, read N- to C-terminus: Cytidine monophosphate-N-acetylneuraminic acid hydroxylase (653 aa).

The Rieske domain occupies L11 to D120. Residues C62, H64, C83, and H86 each coordinate [2Fe-2S] cluster. The interval W596–G622 is disordered. Residues E606–A618 are compositionally biased toward basic and acidic residues. A helical membrane pass occupies residues L630–I647.

Belongs to the CMP-Neu5Ac hydroxylase family. [2Fe-2S] cluster serves as cofactor.

It localises to the membrane. It catalyses the reaction CMP-N-acetyl-beta-neuraminate + 2 Fe(II)-[cytochrome b5] + O2 + 2 H(+) = CMP-N-glycoloyl-beta-neuraminate + 2 Fe(III)-[cytochrome b5] + H2O. The protein operates within amino-sugar metabolism; N-acetylneuraminate metabolism. Functionally, sialic acids are components of carbohydrate chains of glycoconjugates and are involved in cell-cell recognition and cell-pathogen interactions. Catalyzes the conversion of CMP-N-acetylneuraminic acid (CMP-Neu5Ac) into its hydroxylated derivative CMP-N-glycolylneuraminic acid (CMP-Neu5Gc), a sialic acid abundantly expressed at the surface of many cells. In Asterias rubens (Common European starfish), this protein is Cytidine monophosphate-N-acetylneuraminic acid hydroxylase (cnh).